A 760-amino-acid chain; its full sequence is UDP-N-acetylmuramoyl-L-alanyl-D-glutamate--2,6-diaminopimelate ligase MurE homolog, chloroplastic (760 aa).

The transit peptide at 1–59 directs the protein to the chloroplast; it reads MATAPLAFRLPFPFSFPSASRPPPSRILAPPTPRRLPLRLAAAAARRFRPPTADDEPPE. Disordered stretches follow at residues 13 to 159 and 176 to 205; these read PFSF…TDEL and LSVVSVADEEDEEVEGGEDEDDGLPLDEDG. Over residues 20–34 the composition is skewed to pro residues; that stretch reads SRPPPSRILAPPTPR. Positions 53–62 are enriched in acidic residues; sequence ADDEPPEAAE. Residues 118-132 are compositionally biased toward basic and acidic residues; that stretch reads EIDRAIAEKREEFTR. Acidic residues-rich tracts occupy residues 150–159 and 182–205; these read PEDEDLTDEL and ADEEDEEVEGGEDEDDGLPLDEDG.

The protein belongs to the MurCDEF family. MurE subfamily. In terms of assembly, component of the plastid-encoded plastid RNA polymerase (PEP) complex.

The protein localises to the plastid. The protein resides in the chloroplast. Its function is as follows. Required for the activity of the plastid-encoded RNA polymerase (PEP) and full expression of genes transcribed by PEP. Required for the proper build-up and formation of the PEP-complex. This Zea mays (Maize) protein is UDP-N-acetylmuramoyl-L-alanyl-D-glutamate--2,6-diaminopimelate ligase MurE homolog, chloroplastic.